A 633-amino-acid polypeptide reads, in one-letter code: Chaperone protein DnaK (633 aa).

A Phosphothreonine; by autocatalysis modification is found at threonine 198.

Belongs to the heat shock protein 70 family.

Acts as a chaperone. The chain is Chaperone protein DnaK from Rhodopseudomonas palustris (strain HaA2).